The following is a 114-amino-acid chain: Hydrogenase maturation factor HypA (114 aa).

His-2 contacts Ni(2+). Residues Cys-73, Cys-76, Cys-89, and Cys-92 each contribute to the Zn(2+) site.

The protein belongs to the HypA/HybF family.

Its function is as follows. Involved in the maturation of [NiFe] hydrogenases. Required for nickel insertion into the metal center of the hydrogenase. In Caldanaerobacter subterraneus subsp. tengcongensis (strain DSM 15242 / JCM 11007 / NBRC 100824 / MB4) (Thermoanaerobacter tengcongensis), this protein is Hydrogenase maturation factor HypA.